Here is a 2542-residue protein sequence, read N- to C-terminus: Ankyrin repeat and KH domain-containing protein 1 (2542 aa).

Position 1 is an N-acetylmethionine (Met-1). Positions 1-10 (MLTDSGGGGT) are enriched in gly residues. 2 disordered regions span residues 1-44 (MLTD…IRTV) and 50-69 (AGPASGVGSSGGGGSGSGTG). Over residues 20–29 (APRSAPAGAS) the composition is skewed to low complexity. Gly residues predominate over residues 57–69 (GSSGGGGSGSGTG). Phosphoserine is present on residues Ser-101 and Ser-105. ANK repeat units lie at residues 204–233 (VDTRSLAEACSDGDVNAVRKLLDEGRSVNE), 237–266 (EGESLLCLACSAGYYELAQVLLAMHANVED), 271–300 (GDITPLMAASSGGYLDIVKLLLLHDADVNS), 304–333 (TGNTALTYACAGGFVDIVKVLLNEGANIED), 337–366 (NGHTPLMEAASAGHVEVARVLLDHGAGINT), 371–400 (FKESALTLACYKGHLDMVRFLLEAGADQEH), 404–433 (EMHTALMEACMDGHVEVARLLLDSGAQVNM), 437–466 (SFESPLTLAACGGHVELAALLIERGANLEE), 470–499 (EGYTPLMEAAREGHEEMVALLLAQGANINA), 504–533 (TQETALTLACCGGFSEVADFLIKAGADIEL), 534–563 (GCSTPLMEASQEGHLELVKYLLASGANVHA), 567–596 (TGDTALTYACENGHTDVADVLLQAGADLEH), 600–629 (GGRTPLMKAARAGHLCTVQFLISKGANVNR), 634–663 (NDHTVVSLACAGGHLAVVELLLAHGADPTH), and 667–696 (DGSTMLIEAAKGGHTNVVSYLLDYPNNVLS). The stretch at 775-852 (LECIVEETEG…RQLQMKTQQQ (78 aa)) forms a coiled coil. Ser-803 carries the post-translational modification Phosphoserine. ANK repeat units lie at residues 1054-1083 (NHDTALTLACAGGHEELVSVLIARDAKIEH), 1087-1116 (KGFTPLILAATAGHVGVVEILLDKGGDIEA), 1121-1150 (TKDTPLSLACSGGRQEVVDLLLARGANKEH), 1154-1183 (SDYTPLSLAASGGYVNIIKILLNAGAEINS), 1189-1218 (LGISPLMLAAMNGHVPAVKLLLDMGSDINA), 1223-1252 (NRNTALTLACFQGRAEVVSLLLDRKANVEH), 1256-1285 (TGLTPLMEAASGGYAEVGRVLLDKGADVNA), 1291-1320 (SRDTALTIAADKGHYKFCELLIHRGAHIDV), 1324-1353 (KGNTPLWLASNGGHFDVVQLLVQAGADVDA), and 1357-1386 (RKITPLMSAFRKGHVKVVQYLVKEVNQFPS). Residues 1415-1485 (KAKDQQAAEA…ENKPKENSEL (71 aa)) are a coiled coil. 3 disordered regions span residues 1441–1517 (REES…TIGI), 1534–1614 (NVVT…SQEL), and 1632–1664 (SQEEKTSTATSKTQTRLEGEVTPNSLSTSYKTV). Basic residues predominate over residues 1453-1463 (REKRKEKRKKK). A compositionally biased stretch (basic and acidic residues) spans 1464 to 1483 (KEEQKRKQEEDEENKPKENS). The span at 1484 to 1502 (ELPEDEDEEENDEDVEQEV) shows a compositional bias: acidic residues. Over residues 1503-1517 (PIEPPSATTTTTIGI) the composition is skewed to low complexity. A Phosphoserine modification is found at Ser-1540. At Thr-1553 the chain carries Phosphothreonine. Residues 1590–1603 (NSDSDNLDSTDCNS) show a composition bias toward low complexity. Residues 1604–1614 (ESSSGGKSQEL) are compositionally biased toward polar residues. Ser-1632 carries the post-translational modification Phosphoserine. Residues 1638-1664 (STATSKTQTRLEGEVTPNSLSTSYKTV) are compositionally biased toward polar residues. Thr-1653 carries the phosphothreonine modification. In terms of domain architecture, KH spans 1695–1759 (RRSKKLSVPA…ESTRYAVQLI (65 aa)). 3 disordered regions span residues 1886–1923 (NTWGPFPVRPVNPGNTNSSPKHNNTSRLPNQNGTVLPS), 1987–2106 (PSVS…APLT), and 2260–2367 (NMHP…IPPP). Polar residues predominate over residues 1898 to 1922 (PGNTNSSPKHNNTSRLPNQNGTVLP). The span at 1987–1996 (PSVSSAPITS) shows a compositional bias: low complexity. Positions 1997–2019 (GQAPTTFLPASTSQAQLSSQKME) are enriched in polar residues. The span at 2042–2077 (CTPSSTANSCSSSASNTPGAPETHPSSSPTPTSSNT) shows a compositional bias: low complexity. Positions 2078 to 2106 (QEEAQPSSVSDLSPMSMPFASNSEPAPLT) are enriched in polar residues. 2 stretches are compositionally biased toward low complexity: residues 2285–2308 (LPSIDPSGSSPSSSSAPLASFSGI) and 2337–2349 (TSASNSSTSAPPT).

This sequence belongs to the mask family. In terms of assembly, interacts with PTPN11. Isoform 2 interacts with HIV-1 VPR. Interacts with NOD2. Ubiquitous with high expression in cervix, spleen and brain. Expressed in hematopoietic cells with increased expression in leukemia cells. Isoform 2 is highly expressed in spleen with almost no expression in muscle and brain.

The protein localises to the cytoplasm. Its function is as follows. May play a role as a scaffolding protein that may be associated with the abnormal phenotype of leukemia cells. Isoform 2 may possess an antiapoptotic effect and protect cells during normal cell survival through its regulation of caspases. This Homo sapiens (Human) protein is Ankyrin repeat and KH domain-containing protein 1 (ANKHD1).